The chain runs to 72 residues: Hypotensin-1 (72 aa).

The signal sequence occupies residues 1 to 24 (MKMMIPVIFSILLLIFSLSSTAMS). A propeptide spanning residues 25-35 (LEDEQENMEER) is cleaved from the precursor. Serine 41 carries the post-translational modification Phosphoserine. The tract at residues 53 to 72 (ETNAKPPARFDPAAFEKSDD) is disordered. Positions 61–72 (RFDPAAFEKSDD) are excised as a propeptide.

It belongs to the non-disulfide-bridged peptide (NDBP) superfamily. In terms of processing, undergoes enzymatic cleavages by carboxypeptidases, endopeptidases, and aminopeptidases resulting in at least 46 fragments of this protein. In terms of tissue distribution, expressed by the venom gland.

The protein localises to the secreted. Its function is as follows. Agonist of the B2 bradykinin receptor (BDKRB2). Potentiates the hypotensive effect of bradykinin (BK) and induces a direct vasorelaxing effect independent of BK, by endothelium- and nitric oxide (NO)-dependent mechanisms in rat aortic ring preparations. Also exerts proangiogenic, antiinflammatory, and antifibrogenic activities. Does not inhibit the angiotensin-converting enzyme (ACE) but increases its activity, and inhibits neprilysin (NEP) in a non-competitive manner. Exerts intermediate cytotoxicity and pro-inflammatory effects on mouse macrophages, and increases the phagocytic activity of these murine cells. Functionally, presents moderate hemolytic activity at physiological concentrations (micromolar range). Does not induce mast cell degranulation, lactate dehydrogenase (LDH) release from mast cells and antimicrobial effects. In vivo, causes intense pain (but no edema formation), when injected in mice hind paws. Also induces discomfort and anxiety in mice, as it moderately diminishes locomotion and moderately increases rearing behavior. In Tityus serrulatus (Brazilian scorpion), this protein is Hypotensin-1.